The following is a 467-amino-acid chain: ATP-dependent protease ATPase subunit HslU (467 aa).

Residues Ile-20, 62–67, Asp-280, Glu-345, and Arg-417 each bind ATP; that span reads GVGKTE.

It belongs to the ClpX chaperone family. HslU subfamily. In terms of assembly, a double ring-shaped homohexamer of HslV is capped on each side by a ring-shaped HslU homohexamer. The assembly of the HslU/HslV complex is dependent on binding of ATP.

The protein localises to the cytoplasm. ATPase subunit of a proteasome-like degradation complex; this subunit has chaperone activity. The binding of ATP and its subsequent hydrolysis by HslU are essential for unfolding of protein substrates subsequently hydrolyzed by HslV. HslU recognizes the N-terminal part of its protein substrates and unfolds these before they are guided to HslV for hydrolysis. The sequence is that of ATP-dependent protease ATPase subunit HslU from Ligilactobacillus salivarius (strain UCC118) (Lactobacillus salivarius).